We begin with the raw amino-acid sequence, 486 residues long: Glutamyl-tRNA(Gln) amidotransferase subunit A (486 aa).

Active-site charge relay system residues include lysine 79 and serine 154. Serine 178 acts as the Acyl-ester intermediate in catalysis.

The protein belongs to the amidase family. GatA subfamily. In terms of assembly, heterotrimer of A, B and C subunits.

The enzyme catalyses L-glutamyl-tRNA(Gln) + L-glutamine + ATP + H2O = L-glutaminyl-tRNA(Gln) + L-glutamate + ADP + phosphate + H(+). In terms of biological role, allows the formation of correctly charged Gln-tRNA(Gln) through the transamidation of misacylated Glu-tRNA(Gln) in organisms which lack glutaminyl-tRNA synthetase. The reaction takes place in the presence of glutamine and ATP through an activated gamma-phospho-Glu-tRNA(Gln). This Dehalococcoides mccartyi (strain ATCC BAA-2266 / KCTC 15142 / 195) (Dehalococcoides ethenogenes (strain 195)) protein is Glutamyl-tRNA(Gln) amidotransferase subunit A.